A 347-amino-acid polypeptide reads, in one-letter code: Heme A synthase (347 aa).

8 helical membrane-spanning segments follow: residues Val-14–Ile-34, Phe-96–Met-116, Phe-129–Ser-149, Leu-162–Leu-182, Val-199–Gly-219, Phe-260–Leu-280, Met-287–Tyr-307, and Ile-311–Leu-331. His-262 is a heme binding site. Heme is bound at residue His-317.

It belongs to the COX15/CtaA family. Type 2 subfamily. Interacts with CtaB. Requires heme b as cofactor.

Its subcellular location is the cell membrane. It carries out the reaction Fe(II)-heme o + 2 A + H2O = Fe(II)-heme a + 2 AH2. The protein operates within porphyrin-containing compound metabolism; heme A biosynthesis; heme A from heme O: step 1/1. Its function is as follows. Catalyzes the conversion of heme O to heme A by two successive hydroxylations of the methyl group at C8. The first hydroxylation forms heme I, the second hydroxylation results in an unstable dihydroxymethyl group, which spontaneously dehydrates, resulting in the formyl group of heme A. This is Heme A synthase from Ehrlichia ruminantium (strain Welgevonden).